We begin with the raw amino-acid sequence, 678 residues long: DNA ligase (678 aa).

Residues 47 to 51 (DSDYD), 96 to 97 (SL), and E122 each bind NAD(+). Residue K124 is the N6-AMP-lysine intermediate of the active site. NAD(+) is bound by residues R145, E182, K300, and K324. Residues C418, C421, C436, and C442 each coordinate Zn(2+). A BRCT domain is found at 602–678 (AHNESFTNKT…IFEEDLQNLL (77 aa)).

The protein belongs to the NAD-dependent DNA ligase family. LigA subfamily. Requires Mg(2+) as cofactor. The cofactor is Mn(2+).

It catalyses the reaction NAD(+) + (deoxyribonucleotide)n-3'-hydroxyl + 5'-phospho-(deoxyribonucleotide)m = (deoxyribonucleotide)n+m + AMP + beta-nicotinamide D-nucleotide.. In terms of biological role, DNA ligase that catalyzes the formation of phosphodiester linkages between 5'-phosphoryl and 3'-hydroxyl groups in double-stranded DNA using NAD as a coenzyme and as the energy source for the reaction. It is essential for DNA replication and repair of damaged DNA. The polypeptide is DNA ligase (Francisella philomiragia subsp. philomiragia (strain ATCC 25017 / CCUG 19701 / FSC 153 / O#319-036)).